The chain runs to 945 residues: Netrin receptor UNC5B (945 aa).

Residues 1–26 (MRARSGARGALLLALLLCWDPTPSLA) form the signal peptide. At 27–377 (GIDSGGQALP…LEPSGDVALY (351 aa)) the chain is on the extracellular side. The 98-residue stretch at 48-145 (PHFLLEPEDA…SGTTKSRRAY (98 aa)) folds into the Ig-like domain. 9 disulfides stabilise this stretch: C69-C130, C81-C128, C174-C225, C258-C295, C262-C299, C273-C285, C314-C348, C318-C353, and C326-C338. An Ig-like C2-type domain is found at 153–242 (KNFDQEPLAK…KRRSTTATVI (90 aa)). Residue N222 is glycosylated (N-linked (GlcNAc...) asparagine). 2 consecutive TSP type-1 domains span residues 246–300 (NGGW…TVCP) and 302–354 (DGAW…GLCV). N-linked (GlcNAc...) asparagine glycosylation is present at N347. Residues 378 to 398 (AGLVVAVFVVLAVLMAVGVIV) form a helical membrane-spanning segment. Over 399–945 (YRRNCRDFDT…LVAMTTDGDC (547 aa)) the chain is Cytoplasmic. C403 carries S-palmitoyl cysteine lipidation. One can recognise a ZU5 domain in the interval 543–686 (SSVSGTFGCL…LGTYVFTGES (144 aa)). Position 581 is a phosphotyrosine (Y581). A UPA domain region spans residues 689–838 (RSAVKRLQLA…AETPAGSLDA (150 aa)). The tract at residues 707–725 (SLEYSLRVYCLEDTPAALK) is interaction with DCC. A Death domain is found at 865 to 943 (KICNSLDAPN…EMLVAMTTDG (79 aa)).

This sequence belongs to the unc-5 family. As to quaternary structure, interacts with the cytoplasmic part of DCC. Interacts with GNAI2 via its cytoplasmic part. Interacts (via death domain) with DAPK1 (via death domain). Interacts (via extracellular domain) with FLRT3 (via extracellular domain); the interaction is direct. Interacts (via extracellular domain) with FLRT2 and FLRT3 (via extracellular domain), but has higher affinity for FLRT3. Identified in a complex with FLRT3 and ADGRL3; does not interact with ADGRL3 by itself. Post-translationally, phosphorylated on cytoplasmic tyrosine residues. Proteolytically cleaved by caspases during apoptosis. The cleavage does not take place when the receptor is associated with netrin ligand. Its cleavage by caspases is required to induce apoptosis. In terms of processing, palmitoylation is required for pro-apoptotic activity, but not for location at lipid rafts. Mainly expressed in regions of differentiating neurons. Expressed in the developing sensory ganglia that flank the spinal cord from E12, peaking at E14. Expressed in the roof plate region of the spinal cord from E14.

Its subcellular location is the cell membrane. The protein localises to the membrane raft. Receptor for netrin required for axon guidance. Mediates axon repulsion of neuronal growth cones in the developing nervous system upon ligand binding. Axon repulsion in growth cones may be caused by its association with DCC that may trigger signaling for repulsion. Functions as a netrin receptor that negatively regulates vascular branching during angiogenesis. Mediates retraction of tip cell filopodia on endothelial growth cones in response to netrin. It also acts as a dependence receptor required for apoptosis induction when not associated with netrin ligand. Mediates apoptosis by activating DAPK1. In the absence of NTN1, activates DAPK1 by reducing its autoinhibitory phosphorylation at Ser-308 thereby increasing its catalytic activity. The chain is Netrin receptor UNC5B (Unc5b) from Rattus norvegicus (Rat).